The primary structure comprises 439 residues: MDHLAHYYHAHIDELNRRVAEIVSREALSGLVIHSGQPHRMFLDDINYPFKANPHFKAWLPVLDNPNCWLVVNGRDKPQLIFYRPVDFWHKVADVPDMFWTEHFDIKLLTKADKVAELLPTDIANWAYLGEHLDVAEVLGFTSRNPDSVMSYLHFHRTTKTEYELECMRRANQIAVQGHQAAKNAFYNGASEFEIQQQYLSAVGQGENEVPYGNIIALNQNAAILHYTALEHQNPARRLSFLIDAGASYFGYASDITRTYAFEKNRFDELITAMNKAQLELIDMMRPGVRYPDLHLATHGKVAQMLLDFDLATGDAQGLVEQGITSAFFPHGLGHMLGLQVHDVGGFAFDERGTHIPAPEAHPFLRCTRILAPNQVLTMEPGLYIIDSLLNELKQNSRGKQINWNSVDELRPFGGIRIEDNVVVHQDRNENMTRELGLA.

Mn(2+) contacts are provided by Asp244, Asp255, His335, Glu380, and Glu419.

This sequence belongs to the peptidase M24B family. Bacterial-type prolidase subfamily. It depends on Mn(2+) as a cofactor.

The catalysed reaction is Xaa-L-Pro dipeptide + H2O = an L-alpha-amino acid + L-proline. In terms of biological role, splits dipeptides with a prolyl residue in the C-terminal position. The polypeptide is Xaa-Pro dipeptidase (Shewanella oneidensis (strain ATCC 700550 / JCM 31522 / CIP 106686 / LMG 19005 / NCIMB 14063 / MR-1)).